Consider the following 445-residue polypeptide: Tripartite motif-containing protein 43B (445 aa).

Residues 16 to 57 (CSICQGIFMNPVYLKCGHKFCEACLLLFQEDIKFPAYCPMCM) form an RING-type zinc finger. A B box-type zinc finger spans residues 88–129 (SEEHKCVTHKAKKMIFCDKSKILLCHLCSDSQEHSGHTHCSI). C93, H96, C115, and H121 together coordinate Zn(2+). In terms of domain architecture, B30.2/SPRY spans 271–445 (RLRAHSIPGL…VRPFFSAVYT (175 aa)).

The protein belongs to the TRIM/RBCC family.

This chain is Tripartite motif-containing protein 43B, found in Mus musculus (Mouse).